The primary structure comprises 339 residues: NADH-quinone oxidoreductase subunit H (339 aa).

9 helical membrane-spanning segments follow: residues 9 to 29 (IFPL…LILC), 50 to 70 (PNVV…KLLF), 82 to 102 (ILFI…WAVI), 115 to 135 (VGVL…IIAG), 161 to 181 (MGLV…SGII), 187 to 207 (MPWW…ISVL), 235 to 255 (MGFA…SAMT), 275 to 295 (IPGF…FLWI), and 311 to 331 (GWKV…SVLV).

Belongs to the complex I subunit 1 family. As to quaternary structure, NDH-1 is composed of 14 different subunits. Subunits NuoA, H, J, K, L, M, N constitute the membrane sector of the complex.

The protein localises to the cell inner membrane. The enzyme catalyses a quinone + NADH + 5 H(+)(in) = a quinol + NAD(+) + 4 H(+)(out). Its function is as follows. NDH-1 shuttles electrons from NADH, via FMN and iron-sulfur (Fe-S) centers, to quinones in the respiratory chain. The immediate electron acceptor for the enzyme in this species is believed to be ubiquinone. Couples the redox reaction to proton translocation (for every two electrons transferred, four hydrogen ions are translocated across the cytoplasmic membrane), and thus conserves the redox energy in a proton gradient. This subunit may bind ubiquinone. This Rickettsia felis (strain ATCC VR-1525 / URRWXCal2) (Rickettsia azadi) protein is NADH-quinone oxidoreductase subunit H.